The sequence spans 232 residues: MSNVDHAEIAKFEALAHRWWDRESEFKPLHDINPLRVNWIDERVSLAGKKVLDVGCGGGILSEAMAQRGATVTGIDMGEAPLAVAQLHQLESGVDVEYRQITAEALAEEMPEQFDVVTCLEMLEHVPDPSSVIRACYRMVKPGGQVFFSTINRNPKAYLLAIIGAEYILKMLPRGTHDFKKFIRPSELGAWSRVAGLEVKDIIGLTYNPLTKHYKLSNDVDVNYMIQTLREE.

S-adenosyl-L-methionine is bound by residues Arg-36, Gly-55, Asp-76, and Leu-120.

Belongs to the methyltransferase superfamily. UbiG/COQ3 family.

It catalyses the reaction a 3-demethylubiquinol + S-adenosyl-L-methionine = a ubiquinol + S-adenosyl-L-homocysteine + H(+). The enzyme catalyses a 3-(all-trans-polyprenyl)benzene-1,2-diol + S-adenosyl-L-methionine = a 2-methoxy-6-(all-trans-polyprenyl)phenol + S-adenosyl-L-homocysteine + H(+). It participates in cofactor biosynthesis; ubiquinone biosynthesis. In terms of biological role, O-methyltransferase that catalyzes the 2 O-methylation steps in the ubiquinone biosynthetic pathway. This chain is Ubiquinone biosynthesis O-methyltransferase, found in Pseudomonas entomophila (strain L48).